The chain runs to 368 residues: Serine/threonine-protein kinase CAK1 (368 aa).

The region spanning 1-368 (MKLDSIDITH…QRILQELEKP (368 aa)) is the Protein kinase domain. Catalysis depends on Asp156, which acts as the Proton acceptor.

This sequence belongs to the protein kinase superfamily. CMGC Ser/Thr protein kinase family. CDC2/CDKX subfamily.

The catalysed reaction is L-seryl-[protein] + ATP = O-phospho-L-seryl-[protein] + ADP + H(+). It catalyses the reaction L-threonyl-[protein] + ATP = O-phospho-L-threonyl-[protein] + ADP + H(+). The sequence is that of Serine/threonine-protein kinase CAK1 (CAK1) from Saccharomyces cerevisiae (strain ATCC 204508 / S288c) (Baker's yeast).